Consider the following 25-residue polypeptide: GLFSVLGSVAKHLLPHVVPVIAEKL.

L25 is modified (leucine amide).

As to expression, expressed by the skin dorsal glands.

The protein localises to the secreted. Its function is as follows. Shows significant activity against Gram-positive organisms, but is less effective against Gram-negative organisms. This is Caerin-1.18 from Ranoidea gracilenta (Dainty green tree frog).